Here is a 461-residue protein sequence, read N- to C-terminus: Alcaligin biosynthesis enzyme (461 aa).

9–15 (VAIGIGP) serves as a coordination point for FAD.

This sequence belongs to the lysine N(6)-hydroxylase/L-ornithine N(5)-oxygenase family. The cofactor is FAD.

It participates in siderophore biosynthesis; alcaligin biosynthesis. In Bordetella bronchiseptica (strain ATCC BAA-588 / NCTC 13252 / RB50) (Alcaligenes bronchisepticus), this protein is Alcaligin biosynthesis enzyme (alcA).